The following is a 2555-amino-acid chain: Plipastatin synthase subunit C (2555 aa).

A condensation 1 region spans residues Ile-7–Asp-306. The interval Thr-491–Val-894 is adenylation 1. One can recognise a Carrier 1 domain in the interval Ala-967–Thr-1042. O-(pantetheine 4'-phosphoryl)serine is present on Ser-1002. Residues Lys-1054–Glu-1344 form a condensation 2 region. An adenylation 2 region spans residues Thr-1532 to Val-1927. The Carrier 2 domain maps to Pro-2003 to Glu-2077. Ser-2038 is modified (O-(pantetheine 4'-phosphoryl)serine). The epimerization 3 stretch occupies residues Ile-2085–Ile-2548.

The protein belongs to the ATP-dependent AMP-binding enzyme family. It depends on pantetheine 4'-phosphate as a cofactor.

This protein is a multifunctional enzyme, able to activate and polymerize the amino acids Glu and Ala/Val as part of the biosynthesis of the lipopeptide antibiotic plipastatin. The Ala/Val residue is further epimerized to the D-isomer form. The activation sites for these amino acids consist of individual domains. This Bacillus subtilis (strain 168) protein is Plipastatin synthase subunit C (ppsC).